The following is a 559-amino-acid chain: Beta-glucuronidase (559 aa).

Residues 1 to 19 form the signal peptide; it reads MKRILGLIAYASVPTVINA. Residues N53, N91, N99, and N143 are each glycosylated (N-linked (GlcNAc...) asparagine). E194 serves as the catalytic Proton donor. N-linked (GlcNAc...) asparagine glycans are attached at residues N203, N222, and N280. Residue E312 is the Nucleophile of the active site. 5 N-linked (GlcNAc...) asparagine glycosylation sites follow: N427, N440, N465, N491, and N520.

This sequence belongs to the glycosyl hydrolase 79 family.

The protein localises to the secreted. The catalysed reaction is a beta-D-glucuronoside + H2O = D-glucuronate + an alcohol. Functionally, beta-glucuronidase that hydrolyzes beta-glucuronosyl and 4-O-methyl-beta-glucuronosyl residues of arabinogalactan-protein. Hydrolyzed heparan sulfate only very weakly. Has no activity on xylan from birchwood. Able to catalyze the transglycosylation of glucuronic acid (GlcA) residues from p-nitrophenyl-beta-glucuronic acid (PNP beta-GlcA) to various monosaccharide acceptors such as glucose, galactose and xylose. This Neurospora crassa (strain ATCC 24698 / 74-OR23-1A / CBS 708.71 / DSM 1257 / FGSC 987) protein is Beta-glucuronidase.